The following is a 97-amino-acid chain: Biogenesis of lysosome-related organelles complex 1 subunit SNN1 (97 aa).

Residues 45-97 (VVRLKQIRNLLKEEQEYYNEEEGLGVERERLEELELRVEKLTQKYKKLLADCV) adopt a coiled-coil conformation.

The protein belongs to the SNAPIN family. In terms of assembly, component of the biogenesis of lysosome-related organelles complex-1 (BLOC-1).

Its subcellular location is the endosome. Component of the biogenesis of lysosome-related organelles complex-1 (BLOC-1), a complex involved in endosomal cargo sorting. The polypeptide is Biogenesis of lysosome-related organelles complex 1 subunit SNN1 (SNN1) (Lachancea thermotolerans (strain ATCC 56472 / CBS 6340 / NRRL Y-8284) (Yeast)).